The following is a 570-amino-acid chain: Urease subunit alpha (570 aa).

Positions 131-570 (GGMDSHIHFI…LPMAQRYFLF (440 aa)) constitute a Urease domain. Ni(2+) contacts are provided by His-136, His-138, and Lys-219. Lys-219 carries the N6-carboxylysine modification. His-221 contacts substrate. Ni(2+)-binding residues include His-248 and His-274. The Proton donor role is filled by His-322. A Ni(2+)-binding site is contributed by Asp-362.

This sequence belongs to the metallo-dependent hydrolases superfamily. Urease alpha subunit family. As to quaternary structure, heterotrimer of UreA (gamma), UreB (beta) and UreC (alpha) subunits. Three heterotrimers associate to form the active enzyme. It depends on Ni cation as a cofactor. Carboxylation allows a single lysine to coordinate two nickel ions.

It localises to the cytoplasm. It catalyses the reaction urea + 2 H2O + H(+) = hydrogencarbonate + 2 NH4(+). Its pathway is nitrogen metabolism; urea degradation; CO(2) and NH(3) from urea (urease route): step 1/1. In Rhizobium etli (strain ATCC 51251 / DSM 11541 / JCM 21823 / NBRC 15573 / CFN 42), this protein is Urease subunit alpha.